We begin with the raw amino-acid sequence, 220 residues long: MKLNKYIDHTLLKQDAKKKQIDSLLSEAREYGFASVCVNPTWVEHAKKGLEGTDVKVCTVVGFPLGATTSAVKAFETKEAIQNGADEIDMVINVGALKSGNLALVESDIRAVVEASGDKLVKVIIEACLLTDQEKIVVCQLAQKAGADFVKTSTGFSTGGATIADVTLMRETVGSDMGVKAAGGARSYADALAFVEAGATRIGTSAGVAILKGELADGDY.

The active-site Proton donor/acceptor is aspartate 89. Catalysis depends on lysine 151, which acts as the Schiff-base intermediate with acetaldehyde. Residue lysine 180 is the Proton donor/acceptor of the active site.

The protein belongs to the DeoC/FbaB aldolase family. DeoC type 1 subfamily.

It localises to the cytoplasm. The catalysed reaction is 2-deoxy-D-ribose 5-phosphate = D-glyceraldehyde 3-phosphate + acetaldehyde. The protein operates within carbohydrate degradation; 2-deoxy-D-ribose 1-phosphate degradation; D-glyceraldehyde 3-phosphate and acetaldehyde from 2-deoxy-alpha-D-ribose 1-phosphate: step 2/2. Its function is as follows. Catalyzes a reversible aldol reaction between acetaldehyde and D-glyceraldehyde 3-phosphate to generate 2-deoxy-D-ribose 5-phosphate. The polypeptide is Deoxyribose-phosphate aldolase (Streptococcus pneumoniae serotype 2 (strain D39 / NCTC 7466)).